The sequence spans 1040 residues: Multidrug resistance protein MdtB (1040 aa).

12 helical membrane passes run 25–45 (LLMAAILLAGIIGYRFLPVAA), 347–367 (LMLAIALVVMIIYLFLRNIPA), 369–389 (IIPGVAVPLSLIGTFAVMVFL), 396–416 (LTLMALTIATGFVVDDAIVVI), 440–460 (IGFTIISLTFSLIAVLIPLLF), 472–492 (FAVTLAVAILISAVVSLTLTP), 537–557 (WLTLSVAFATLLLSVMLWIVI), 863–883 (LGSTVWLIVAAVVAMYIVLGV), 888–908 (FIHPITILSTLPTAGVGALLA), 910–930 (IIAGSELDIIAIIGIILLIGI), 968–988 (ILMTTLAALLGALPLMLSTGV), and 998–1018 (IAMVGGLLVSQVLTLFTTPVI).

The protein belongs to the resistance-nodulation-cell division (RND) (TC 2.A.6) family. MdtB subfamily. As to quaternary structure, part of a tripartite efflux system composed of MdtA, MdtB and MdtC. MdtB forms a heteromultimer with MdtC.

It localises to the cell inner membrane. The sequence is that of Multidrug resistance protein MdtB from Salmonella gallinarum (strain 287/91 / NCTC 13346).